We begin with the raw amino-acid sequence, 224 residues long: Transmembrane emp24 domain-containing protein 7 (224 aa).

Residues 1 to 34 form the signal peptide; that stretch reads MPRPGSAQRWAAVAGRWGCRLLALLLLVPGPGGA. Residues 35-187 are Lumenal-facing; sequence SEITFELPDN…RAEDLNTRVA (153 aa). The region spanning 46–128 is the GOLD domain; that stretch reads KQCFYEDIAQ…HKTVYFDFQV (83 aa). N-linked (GlcNAc...) asparagine glycosylation is present at Asn-103. A helical transmembrane segment spans residues 188-208; it reads YWSVGEALILLVVSIGQVFLL. Residues 209–224 are Cytoplasmic-facing; it reads KSFFSDKRTTTTRVGS. Residues 211–212 carry the COPII vesicle coat-binding motif; the sequence is FF. The COPI vesicle coat-binding motif lies at 211-224; that stretch reads FFSDKRTTTTRVGS.

The protein belongs to the EMP24/GP25L family. In terms of assembly, predominantly monomeric and to lesser extent homodimeric in endoplasmic reticulum, endoplasmic reticulum-Golgi intermediate compartment and cis-Golgi network. Oligomerizes with other members of the EMP24/GP25L family such as TMED2, TMED9 and TMED10. Interacts (via C-terminus) with COPG1; the interaction involves dimeric TMED7. In terms of processing, N-linked glycosylated in complex form containing terminal sialic acid.

The protein resides in the endoplasmic reticulum membrane. The protein localises to the golgi apparatus. Its subcellular location is the cis-Golgi network membrane. It localises to the endoplasmic reticulum-Golgi intermediate compartment membrane. It is found in the cytoplasmic vesicle. The protein resides in the COPI-coated vesicle membrane. The protein localises to the COPII-coated vesicle membrane. Functionally, potential role in vesicular protein trafficking, mainly in the early secretory pathway. Appears to play a role in the biosynthesis of secreted cargo including processing and post-translational modifications. This chain is Transmembrane emp24 domain-containing protein 7 (TMED7), found in Homo sapiens (Human).